The following is a 277-amino-acid chain: NH(3)-dependent NAD(+) synthetase (277 aa).

47–54 (GISGGQDS) is an ATP binding site. D53 lines the Mg(2+) pocket. R141 serves as a coordination point for deamido-NAD(+). T161 contributes to the ATP binding site. Residue E166 coordinates Mg(2+). K174 and D181 together coordinate deamido-NAD(+). Residues K190 and T212 each coordinate ATP. 261-262 (HK) contacts deamido-NAD(+).

Belongs to the NAD synthetase family. Homodimer.

It catalyses the reaction deamido-NAD(+) + NH4(+) + ATP = AMP + diphosphate + NAD(+) + H(+). Its pathway is cofactor biosynthesis; NAD(+) biosynthesis; NAD(+) from deamido-NAD(+) (ammonia route): step 1/1. Its function is as follows. Catalyzes the ATP-dependent amidation of deamido-NAD to form NAD. Uses ammonia as a nitrogen source. In Lactobacillus gasseri (strain ATCC 33323 / DSM 20243 / BCRC 14619 / CIP 102991 / JCM 1131 / KCTC 3163 / NCIMB 11718 / NCTC 13722 / AM63), this protein is NH(3)-dependent NAD(+) synthetase.